The sequence spans 363 residues: uncharacterized protein (363 aa).

This is an uncharacterized protein from Methanocaldococcus jannaschii (strain ATCC 43067 / DSM 2661 / JAL-1 / JCM 10045 / NBRC 100440) (Methanococcus jannaschii).